Reading from the N-terminus, the 1296-residue chain is Aggregation substance (1296 aa).

The first 43 residues, Met-1 to Ala-43, serve as a signal peptide directing secretion. Disordered stretches follow at residues Thr-48–Glu-188 and His-1221–Ala-1245. The segment covering Lys-89–Gly-99 has biased composition (basic and acidic residues). 2 stretches are compositionally biased toward polar residues: residues Ala-100–Thr-117 and Gln-125–Pro-138. Residues Lys-160–Pro-178 show a composition bias toward basic and acidic residues. The LPXTG sorting signal motif lies at Leu-1261–Gly-1265. At Thr-1264 the chain carries Pentaglycyl murein peptidoglycan amidated threonine. A propeptide spans Gly-1265 to Lys-1296 (removed by sortase).

Belongs to the antigen I/II family.

The protein localises to the secreted. It localises to the cell wall. Aggregation substance allows donor and recipient strains to form tight aggregates which allow the non-motile bacteria to maintain physical contact over a period of time sufficient to permit conjugative transfer of the sex pheromone plasmid from donor to recipient strains. This is Aggregation substance (asa1) from Enterococcus faecalis (strain ATCC 700802 / V583).